A 741-amino-acid polypeptide reads, in one-letter code: Mitofusin-1 (741 aa).

Over Met1 to Leu584 the chain is Cytoplasmic. Positions Lys9–Arg73 are part of a helix bundle domain, formed by helices from N-terminal and C-terminal regions. A Dynamin-type G domain is found at Ser72–Glu321. Residues Gly82 to Ser89 form a G1 motif region. Residue Ser85–Ser90 coordinates GTP. Residues Ile108–Thr109 are G2 motif. Positions Asp178–Gly181 are G3 motif. Residue Asn237–Asp240 participates in GTP binding. The G4 motif stretch occupies residues Asn237–Asp240. A region of interest (G5 motif) is located at residue Glu266. Residues Ser284 and Lys286 each contribute to the GTP site. Residues Glu338–Asp364 form a part of a helix bundle domain, formed by helices from N-terminal and C-terminal regions region. Residues Glu371–Lys408 are a coiled coil. The chain crosses the membrane as a helical span at residues Val585–Val605. Residues Ile606–Lys608 lie on the Mitochondrial intermembrane side of the membrane. Residues Thr609–Glu629 traverse the membrane as a helical segment. At Arg630 to Ser741 the chain is on the cytoplasmic side. Residues Arg679–Leu734 are a coiled coil. The segment at Asp703–Leu734 is part of a helix bundle domain, formed by helices from N-terminal and C-terminal regions.

The protein belongs to the TRAFAC class dynamin-like GTPase superfamily. Dynamin/Fzo/YdjA family. Mitofusin subfamily. As to quaternary structure, homodimer, also in the absence of bound GTP. Forms higher oligomers in the presence of a transition state GTP analog. Forms homomultimers and heteromultimers with MFN2. Oligomerization is essential for mitochondrion fusion. Component of a high molecular weight multiprotein complex. Interacts with VAT1. Interacts with THG1L; THG1L probably functions as a guanyl-nucleotide exchange factor/GEF, activating MFN1. Post-translationally, ubiquitinated by non-degradative ubiquitin by PRKN. Deubiquitination by USP30 inhibits mitochondrial fusion. Ubiquitinated by MARCHF5. When mitochondria are depolarized and dysfunctional, it is ubiquitinated by a SCF (SKP1-CUL1-F-box protein) E3 ubiquitin-protein ligase complex that contains FBXO7 and PRKN. Detected in kidney and heart (at protein level). Ubiquitous. Expressed at slightly higher level in kidney and heart. Isoform 2 may be overexpressed in some tumors, such as lung cancers.

It localises to the mitochondrion outer membrane. The protein resides in the cytoplasm. It carries out the reaction GTP + H2O = GDP + phosphate + H(+). In terms of biological role, mitochondrial outer membrane GTPase that mediates mitochondrial clustering and fusion. Membrane clustering requires GTPase activity. It may involve a major rearrangement of the coiled coil domains. Mitochondria are highly dynamic organelles, and their morphology is determined by the equilibrium between mitochondrial fusion and fission events. Overexpression induces the formation of mitochondrial networks (in vitro). Has low GTPase activity. This is Mitofusin-1 (MFN1) from Homo sapiens (Human).